Here is a 602-residue protein sequence, read N- to C-terminus: Auxin response factor 18 (602 aa).

The segment at residues 128–230 (FVKILTASDT…DLRVGVRRLA (103 aa)) is a DNA-binding region (TF-B3). The segment at 359-396 (TSPISTPAQQPQSKCKRSRPIEPSVKTPAPPSFLYSLP) is disordered. Positions 360-371 (SPISTPAQQPQS) are enriched in polar residues. Positions 489-581 (RSRTKVQMQG…EVKKMTTKLK (93 aa)) constitute a PB1 domain.

The protein belongs to the ARF family. As to quaternary structure, homodimers and heterodimers.

The protein resides in the nucleus. In terms of biological role, auxin response factors (ARFs) are transcriptional factors that bind specifically to the DNA sequence 5'-TGTCTC-3' found in the auxin-responsive promoter elements (AuxREs). Could act as transcriptional activator or repressor. Formation of heterodimers with Aux/IAA proteins may alter their ability to modulate early auxin response genes expression. This is Auxin response factor 18 (ARF18) from Arabidopsis thaliana (Mouse-ear cress).